Here is a 195-residue protein sequence, read N- to C-terminus: Penicillin-binding protein activator LpoB (195 aa).

The N-terminal stretch at 1 to 16 (MKKRALIVLAALVLAS) is a signal peptide. Cysteine 17 carries N-palmitoyl cysteine lipidation. The S-diacylglycerol cysteine moiety is linked to residue cysteine 17. The segment at 19–51 (SRKPASPPAPIEPVPPPVTVSVQPPPPATSEPV) is disordered. Residues 23-51 (ASPPAPIEPVPPPVTVSVQPPPPATSEPV) show a composition bias toward pro residues.

This sequence belongs to the LpoB family. As to quaternary structure, interacts with PBP1b.

The protein localises to the cell outer membrane. In terms of biological role, regulator of peptidoglycan synthesis that is essential for the function of penicillin-binding protein 1B (PBP1b). This chain is Penicillin-binding protein activator LpoB, found in Sodalis glossinidius (strain morsitans).